Consider the following 287-residue polypeptide: Ribosomal RNA small subunit methyltransferase A (287 aa).

S-adenosyl-L-methionine contacts are provided by Asn-18, Leu-20, Gly-45, Glu-66, Asp-91, and Asn-118.

The protein belongs to the class I-like SAM-binding methyltransferase superfamily. rRNA adenine N(6)-methyltransferase family. RsmA subfamily.

The protein resides in the cytoplasm. It catalyses the reaction adenosine(1518)/adenosine(1519) in 16S rRNA + 4 S-adenosyl-L-methionine = N(6)-dimethyladenosine(1518)/N(6)-dimethyladenosine(1519) in 16S rRNA + 4 S-adenosyl-L-homocysteine + 4 H(+). Functionally, specifically dimethylates two adjacent adenosines (A1518 and A1519) in the loop of a conserved hairpin near the 3'-end of 16S rRNA in the 30S particle. May play a critical role in biogenesis of 30S subunits. This Haemophilus influenzae (strain PittEE) protein is Ribosomal RNA small subunit methyltransferase A.